The sequence spans 98 residues: MSVSITPLEDRIVVKPLDAEQTTASGLVIPDTAKEKPQEGEVLAVGPGRVDDNGNRVPVDVAVGDKVIYSKYGGTEVKYGGDELLILSARDVLAKVAK.

This sequence belongs to the GroES chaperonin family. In terms of assembly, heptamer of 7 subunits arranged in a ring. Interacts with the chaperonin GroEL.

It is found in the cytoplasm. Functionally, together with the chaperonin GroEL, plays an essential role in assisting protein folding. The GroEL-GroES system forms a nano-cage that allows encapsulation of the non-native substrate proteins and provides a physical environment optimized to promote and accelerate protein folding. GroES binds to the apical surface of the GroEL ring, thereby capping the opening of the GroEL channel. This chain is Co-chaperonin GroES, found in Kineococcus radiotolerans (strain ATCC BAA-149 / DSM 14245 / SRS30216).